We begin with the raw amino-acid sequence, 177 residues long: Probable DNA-directed RNA polymerase subunit delta (177 aa).

Residues 14–83 enclose the HTH HARE-type domain; that stretch reads LSMIEVARAI…GENKWGLRSW (70 aa). Acidic residues-rich tracts occupy residues 117-134 and 142-157; these read GDDD…DEDN and EYDD…EVES. Residues 117–164 are disordered; that stretch reads GDDDAIDYGHDDPEDEDNYPGSVSSEYDDENPDDEKDEVESYDQKSTK.

The protein belongs to the RpoE family. In terms of assembly, RNAP is composed of a core of 2 alpha, a beta and a beta' subunits. The core is associated with a delta subunit and one of several sigma factors.

Participates in both the initiation and recycling phases of transcription. In the presence of the delta subunit, RNAP displays an increased specificity of transcription, a decreased affinity for nucleic acids, and an increased efficiency of RNA synthesis because of enhanced recycling. The protein is Probable DNA-directed RNA polymerase subunit delta of Streptococcus suis (strain 98HAH33).